Here is a 69-residue protein sequence, read N- to C-terminus: Cytochrome c oxidase assembly factor 3, mitochondrial (69 aa).

Over 1–19 (MNQGNQAFENARKPFRRAN) the chain is Mitochondrial matrix. Residues 20–42 (LITALGLGAFAFATFAYSVYRVH) form a helical membrane-spanning segment. Topologically, residues 43–69 (EDTFEDVVMTPELEKKIAEDRDLSKKN) are mitochondrial intermembrane.

It belongs to the COA3 family. Component of 250-400 kDa complexes called cytochrome oxidase assembly intermediates or COA complexes.

The protein resides in the mitochondrion inner membrane. Required for assembly of cytochrome c oxidase (complex IV). This chain is Cytochrome c oxidase assembly factor 3, mitochondrial (coa3), found in Schizosaccharomyces pombe (strain 972 / ATCC 24843) (Fission yeast).